We begin with the raw amino-acid sequence, 1040 residues long: Multidrug resistance protein MdtB (1040 aa).

12 helical membrane-spanning segments follow: residues 16–36 (FIMR…AGII), 347–367 (LMMA…NIPA), 369–389 (IIPG…MVFL), 396–416 (LTLM…IVVI), 440–460 (IGFT…PLLF), 472–492 (FAIT…TLTP), 537–557 (WLTL…WVFI), 863–883 (LGST…VLGI), 888–908 (FIHP…ALLA), 911–931 (IAGS…IGIV), 968–988 (ILMT…STGV), and 998–1018 (IGMV…TPVI).

It belongs to the resistance-nodulation-cell division (RND) (TC 2.A.6) family. MdtB subfamily. As to quaternary structure, part of a tripartite efflux system composed of MdtA, MdtB and MdtC. MdtB forms a heteromultimer with MdtC.

Its subcellular location is the cell inner membrane. Its function is as follows. The MdtABC tripartite complex confers resistance against novobiocin and deoxycholate. In Escherichia coli O157:H7 (strain EC4115 / EHEC), this protein is Multidrug resistance protein MdtB.